The chain runs to 805 residues: Leucine--tRNA ligase (805 aa).

A 'HIGH' region motif is present at residues 40–51 (PYPSGSGLHVGH). Positions 576–580 (KMSKS) match the 'KMSKS' region motif. ATP is bound at residue K579.

This sequence belongs to the class-I aminoacyl-tRNA synthetase family.

It localises to the cytoplasm. The catalysed reaction is tRNA(Leu) + L-leucine + ATP = L-leucyl-tRNA(Leu) + AMP + diphosphate. This chain is Leucine--tRNA ligase, found in Chlorobium phaeovibrioides (strain DSM 265 / 1930) (Prosthecochloris vibrioformis (strain DSM 265)).